Reading from the N-terminus, the 333-residue chain is Glycerol-3-phosphate dehydrogenase [NAD(P)+] (333 aa).

Residues serine 10, tryptophan 11, and lysine 105 each contribute to the NADPH site. Residues lysine 105, glycine 136, and threonine 138 each contribute to the sn-glycerol 3-phosphate site. Alanine 140 is a binding site for NADPH. Positions 191, 244, 254, 255, and 256 each coordinate sn-glycerol 3-phosphate. The Proton acceptor role is filled by lysine 191. Arginine 255 is a binding site for NADPH. NADPH-binding residues include valine 279 and glutamate 281.

The protein belongs to the NAD-dependent glycerol-3-phosphate dehydrogenase family.

It is found in the cytoplasm. The enzyme catalyses sn-glycerol 3-phosphate + NAD(+) = dihydroxyacetone phosphate + NADH + H(+). The catalysed reaction is sn-glycerol 3-phosphate + NADP(+) = dihydroxyacetone phosphate + NADPH + H(+). The protein operates within membrane lipid metabolism; glycerophospholipid metabolism. Catalyzes the reduction of the glycolytic intermediate dihydroxyacetone phosphate (DHAP) to sn-glycerol 3-phosphate (G3P), the key precursor for phospholipid synthesis. This chain is Glycerol-3-phosphate dehydrogenase [NAD(P)+], found in Syntrophotalea carbinolica (strain DSM 2380 / NBRC 103641 / GraBd1) (Pelobacter carbinolicus).